The primary structure comprises 392 residues: Ceramide synthase 5 (392 aa).

Residues 1–46 (MATAAQGPLSLLWGWLWSERFWLPENVSWADLEGPADGYGYPRGRH) are Lumenal-facing. A glycan (N-linked (GlcNAc...) asparagine) is linked at asparagine 26. A helical membrane pass occupies residues 47–67 (ILSVFPLAAGIFFVRLLFERF). Residues 75 to 136 (CIGIEDSGPY…RHRRNQDKPP (62 aa)) form a homeobox-like region. Residues 139–340 (TKFCESMWRF…IARIALKALI (202 aa)) form the TLC domain. 4 helical membrane-spanning segments follow: residues 148–168 (FTFYLCIFCYGIRFLWSSPWF), 183–203 (LSSGLYHYYIMELAFYWSLMF), 214–234 (FLIMFVHHLVTIGLISFSYIN), and 272–292 (LFVIFSAVFMVTRLGIYPFWI). The Last loop motif motif lies at 299–309 (ESWEIIGPYAS). A helical transmembrane segment spans residues 311-331 (WLLNGLLLTLQLLHVIWSYLI). Residues 332–392 (ARIALKALIR…HMGGSYWAEE (61 aa)) are Cytoplasmic-facing. Residues 349–392 (RSDVESSSEEEDVTTCTKSPCDSSSSNGANRVNGHMGGSYWAEE) are disordered. Residues 362–378 (TTCTKSPCDSSSSNGAN) are compositionally biased toward polar residues.

In terms of assembly, interacts with PAQR4; the interaction regulates the stability and activity of CERS5 and is inhibited in presence of ceramides. Post-translationally, phosphorylated at the C-terminus by CK2.

It is found in the endoplasmic reticulum membrane. It catalyses the reaction a sphingoid base + hexadecanoyl-CoA = an N-hexadecanoyl-sphingoid base + CoA + H(+). The enzyme catalyses sphinganine + hexadecanoyl-CoA = N-hexadecanoylsphinganine + CoA + H(+). It carries out the reaction hexadecasphinganine + hexadecanoyl-CoA = N-hexadecanoylhexadecasphinganine + CoA + H(+). The catalysed reaction is sphing-4-enine + hexadecanoyl-CoA = N-hexadecanoylsphing-4-enine + CoA + H(+). It catalyses the reaction 2-hydroxyhexadecanoyl-CoA + sphinganine = N-(2-hydroxyhexadecanoyl)-sphinganine + CoA + H(+). The enzyme catalyses sphinganine + tetradecanoyl-CoA = N-(tetradecanoyl)-sphinganine + CoA + H(+). It carries out the reaction sphinganine + octadecanoyl-CoA = N-(octadecanoyl)-sphinganine + CoA + H(+). The catalysed reaction is sphinganine + (9Z)-octadecenoyl-CoA = N-(9Z-octadecenoyl)-sphinganine + CoA + H(+). It catalyses the reaction a fatty acyl-CoA + sphing-4-enine = an N-acylsphing-4-enine + CoA + H(+). It participates in lipid metabolism; sphingolipid metabolism. Inhibited by fumonisin B1. Functionally, ceramide synthase that catalyzes the transfer of the acyl chain from acyl-CoA to a sphingoid base, with high selectivity toward palmitoyl-CoA (hexadecanoyl-CoA; C16:0-CoA). Can use other acyl donors, but with less efficiency. N-acylates sphinganine and sphingosine bases to form dihydroceramides and ceramides in de novo synthesis and salvage pathways, respectively. Plays a role in de novo ceramide synthesis and surfactant homeostasis in pulmonary epithelia. The protein is Ceramide synthase 5 of Homo sapiens (Human).